The sequence spans 304 residues: UDP-3-O-acyl-N-acetylglucosamine deacetylase (304 aa).

H78, H237, and D241 together coordinate Zn(2+). H264 functions as the Proton donor in the catalytic mechanism.

The protein belongs to the LpxC family. Requires Zn(2+) as cofactor.

It carries out the reaction a UDP-3-O-[(3R)-3-hydroxyacyl]-N-acetyl-alpha-D-glucosamine + H2O = a UDP-3-O-[(3R)-3-hydroxyacyl]-alpha-D-glucosamine + acetate. It participates in glycolipid biosynthesis; lipid IV(A) biosynthesis; lipid IV(A) from (3R)-3-hydroxytetradecanoyl-[acyl-carrier-protein] and UDP-N-acetyl-alpha-D-glucosamine: step 2/6. In terms of biological role, catalyzes the hydrolysis of UDP-3-O-myristoyl-N-acetylglucosamine to form UDP-3-O-myristoylglucosamine and acetate, the committed step in lipid A biosynthesis. This Legionella pneumophila (strain Paris) protein is UDP-3-O-acyl-N-acetylglucosamine deacetylase.